The sequence spans 380 residues: Zinc finger protein neuro-d4 (380 aa).

The segment at 132–164 is disordered; sequence ALLDCQKPPPGDFAHDAEGDEMEDDAPRRKNKA. The segment at 190–213 adopts a C2H2-type zinc-finger fold; that stretch reads YVCDICGKRYKNRPGLSYHYTHTH. PHD-type zinc fingers lie at residues 262–321 and 318–368; these read EGPC…CKNC and CKNC…CLRQ. The Zn(2+) site is built by cysteine 265, cysteine 268, cysteine 286, cysteine 289, histidine 294, cysteine 297, cysteine 315, cysteine 318, cysteine 321, cysteine 324, cysteine 336, cysteine 339, histidine 344, cysteine 347, cysteine 362, and cysteine 365.

It belongs to the requiem/DPF family. As to quaternary structure, component of neuron-specific chromatin remodeling complex (nBAF complex), a subfamily of ATP-dependent SWI/SNF chromatin remodeling complexes.

Its subcellular location is the cytoplasm. The protein resides in the nucleus. In terms of biological role, may have an important role in developing neurons by participating in regulation of cell survival, possibly as a neurospecific transcription factor. Belongs to the neuron-specific chromatin remodeling complex (nBAF complex) and plays a role in neural development. This chain is Zinc finger protein neuro-d4, found in Gallus gallus (Chicken).